Reading from the N-terminus, the 158-residue chain is Protein-export protein SecB (158 aa).

It belongs to the SecB family. Homotetramer, a dimer of dimers. One homotetramer interacts with 1 SecA dimer.

The protein resides in the cytoplasm. Its function is as follows. One of the proteins required for the normal export of preproteins out of the cell cytoplasm. It is a molecular chaperone that binds to a subset of precursor proteins, maintaining them in a translocation-competent state. It also specifically binds to its receptor SecA. This chain is Protein-export protein SecB, found in Yersinia pestis (strain Pestoides F).